The following is a 165-amino-acid chain: Nucleotide-binding protein CFF8240_1664 (165 aa).

Belongs to the YajQ family.

In terms of biological role, nucleotide-binding protein. The sequence is that of Nucleotide-binding protein CFF8240_1664 from Campylobacter fetus subsp. fetus (strain 82-40).